A 159-amino-acid polypeptide reads, in one-letter code: Phosphopantetheine adenylyltransferase (159 aa).

Position 9 (S9) interacts with substrate. ATP-binding positions include 9-10 (SF) and H17. Residues K41, L73, and K87 each coordinate substrate. ATP is bound by residues 88–90 (GLR), E98, and 123–129 (NIHISSS).

This sequence belongs to the bacterial CoaD family. As to quaternary structure, homohexamer. It depends on Mg(2+) as a cofactor.

Its subcellular location is the cytoplasm. The enzyme catalyses (R)-4'-phosphopantetheine + ATP + H(+) = 3'-dephospho-CoA + diphosphate. It participates in cofactor biosynthesis; coenzyme A biosynthesis; CoA from (R)-pantothenate: step 4/5. Functionally, reversibly transfers an adenylyl group from ATP to 4'-phosphopantetheine, yielding dephospho-CoA (dPCoA) and pyrophosphate. The polypeptide is Phosphopantetheine adenylyltransferase (Clostridium beijerinckii (strain ATCC 51743 / NCIMB 8052) (Clostridium acetobutylicum)).